The sequence spans 177 residues: Endoribonuclease YbeY (177 aa).

Zn(2+) is bound by residues His-118, His-122, and His-128.

This sequence belongs to the endoribonuclease YbeY family. Zn(2+) serves as cofactor.

The protein localises to the cytoplasm. Its function is as follows. Single strand-specific metallo-endoribonuclease involved in late-stage 70S ribosome quality control and in maturation of the 3' terminus of the 16S rRNA. This chain is Endoribonuclease YbeY, found in Mycolicibacterium paratuberculosis (strain ATCC BAA-968 / K-10) (Mycobacterium paratuberculosis).